The sequence spans 616 residues: Chaperone protein HtpG (616 aa).

Residues 1–333 (MKKQFDTEVN…CQDLPLNVSR (333 aa)) are a; substrate-binding. Residues 334–542 (EILQQNKILS…SNDPTYQMQK (209 aa)) form a b region. The tract at residues 543 to 616 (IMLSMGQEVK…INEFLEKELL (74 aa)) is c.

Belongs to the heat shock protein 90 family. In terms of assembly, homodimer.

The protein resides in the cytoplasm. In terms of biological role, molecular chaperone. Has ATPase activity. This Borrelia garinii subsp. bavariensis (strain ATCC BAA-2496 / DSM 23469 / PBi) (Borreliella bavariensis) protein is Chaperone protein HtpG.